The chain runs to 335 residues: Protein-lysine N-methyltransferase EEF2KMT (335 aa).

An N-acetylmethionine modification is found at Met-1. Residues Trp-139, 165 to 167, Trp-228, and Ala-247 each bind S-adenosyl-L-methionine; that span reads GSG.

This sequence belongs to the class I-like SAM-binding methyltransferase superfamily. EEF2KMT family. Interacts with FAM86B2 and FAM86C1P.

The protein resides in the cytoplasm. The catalysed reaction is L-lysyl-[protein] + 3 S-adenosyl-L-methionine = N(6),N(6),N(6)-trimethyl-L-lysyl-[protein] + 3 S-adenosyl-L-homocysteine + 3 H(+). Its function is as follows. Catalyzes the trimethylation of eukaryotic elongation factor 2 (EEF2) on 'Lys-525'. The chain is Protein-lysine N-methyltransferase EEF2KMT (Eef2kmt) from Mus musculus (Mouse).